A 1812-amino-acid chain; its full sequence is Sperm flagellar protein 2 (1812 aa).

One can recognise a Calponin-homology (CH) domain in the interval Met-1–Gln-105. Coiled-coil stretches lie at residues Leu-178–Gln-260 and Glu-374–Ala-403. The span at Glu-618–Asp-630 shows a compositional bias: basic and acidic residues. The disordered stretch occupies residues Glu-618 to Thr-658. 3 coiled-coil regions span residues Leu-724 to Gln-750, Glu-803 to Gln-827, and Lys-868 to Phe-897. The span at Glu-879–Phe-897 shows a compositional bias: basic and acidic residues. Disordered stretches follow at residues Glu-879–Ser-1002, Glu-1272–Ile-1322, and Glu-1793–Lys-1812. Positions Ala-902–Ser-913 are enriched in pro residues. Basic and acidic residues-rich tracts occupy residues Glu-914–Lys-929, His-943–Pro-961, and Glu-1272–Pro-1285. A compositionally biased stretch (basic residues) spans Lys-1292 to Gly-1310. Residues Glu-1317 to Met-1669 are interaction with IFT20.

As to quaternary structure, interacts (via C-terminus) with IFT20. Interacts with DYNC1I2. As to expression, predominantly expressed in ciliated tissues. Mainly expressed in testis, followed by trachea. Also expressed at lower level in lung, kidney and liver.

It is found in the cell projection. Its subcellular location is the cilium. The protein localises to the flagellum. The protein resides in the cytoplasm. It localises to the golgi apparatus. Functionally, required for correct axoneme development in spermatozoa. Important for normal development of the manchette and sperm head morphology. Essential for male fertility. Plays a role in localization of the intraflagellar transport protein IFT20 to the manchette, suggesting function as an adapter for dynein-mediated protein transport during spermatogenesis. Also plays a role in bone growth where it seems to be required for normal osteoblast differentiation. This Sus scrofa (Pig) protein is Sperm flagellar protein 2 (SPEF2).